Reading from the N-terminus, the 216-residue chain is UPF0323 lipoprotein HPAG1_0235 (216 aa).

Residues 1–27 (MKKPYRKISDYAIVGGLSALVMVSIVG) form the signal peptide. Cys28 is lipidated: N-palmitoyl cysteine. A lipid anchor (S-diacylglycerol cysteine) is attached at Cys28. Positions 159–196 (QRTYKSPQAYQRSQNSFSKSAPSASGMGTASKGQSGFF) are enriched in polar residues. Positions 159–216 (QRTYKSPQAYQRSQNSFSKSAPSASGMGTASKGQSGFFGSSRPTSSPAVSSGTRGFNA) are disordered. The span at 198–209 (SSRPTSSPAVSS) shows a compositional bias: low complexity.

Belongs to the UPF0323 family.

The protein localises to the cell membrane. This chain is UPF0323 lipoprotein HPAG1_0235, found in Helicobacter pylori (strain HPAG1).